The sequence spans 21 residues: Fibrinogen beta chain (21 aa).

Residues 1–11 (EFPTDYDEGED) are compositionally biased toward acidic residues. Residues 1–21 (EFPTDYDEGEDDRPKVGLGAR) are disordered. At Tyr6 the chain carries Sulfotyrosine.

Heterohexamer; disulfide linked. Contains 2 sets of 3 non-identical chains (alpha, beta and gamma). The 2 heterotrimers are in head to head conformation with the N-termini in a small central domain. In terms of processing, conversion of fibrinogen to fibrin is triggered by thrombin, which cleaves fibrinopeptides A and B from alpha and beta chains, and thus exposes the N-terminal polymerization sites responsible for the formation of the soft clot.

The protein resides in the secreted. Its function is as follows. Cleaved by the protease thrombin to yield monomers which, together with fibrinogen alpha (FGA) and fibrinogen gamma (FGG), polymerize to form an insoluble fibrin matrix. Fibrin has a major function in hemostasis as one of the primary components of blood clots. In addition, functions during the early stages of wound repair to stabilize the lesion and guide cell migration during re-epithelialization. Was originally thought to be essential for platelet aggregation, based on in vitro studies using anticoagulated blood. However subsequent studies have shown that it is not absolutely required for thrombus formation in vivo. Enhances expression of SELP in activated platelets. Maternal fibrinogen is essential for successful pregnancy. Fibrin deposition is also associated with infection, where it protects against IFNG-mediated hemorrhage. May also facilitate the antibacterial immune response via both innate and T-cell mediated pathways. This is Fibrinogen beta chain (FGB) from Bison bonasus (European bison).